The sequence spans 218 residues: Small ribosomal subunit protein uS3 (218 aa).

The KH type-2 domain maps to 2–71 (SAPQRRLPVY…IGRKGAIVKE (70 aa)).

It belongs to the universal ribosomal protein uS3 family. In terms of assembly, part of the 30S ribosomal subunit.

Functionally, binds the lower part of the 30S subunit head. This chain is Small ribosomal subunit protein uS3, found in Pyrobaculum aerophilum (strain ATCC 51768 / DSM 7523 / JCM 9630 / CIP 104966 / NBRC 100827 / IM2).